The chain runs to 445 residues: RCC1 domain-containing protein RUG3, mitochondrial (445 aa).

The N-terminal 22 residues, 1-22 (MAALSHRLRSFTRRFSSTRTTQ), are a transit peptide targeting the mitochondrion. RCC1 repeat units follow at residues 47-101 (TLQL…DSSS), 118-169 (DGDL…ALTH), 171-221 (GDVF…AITE), 222-279 (SGEL…ALTK), 280-331 (EGQL…ALTE), 333-383 (GKVL…AITD), and 385-442 (GELW…CLVS).

As to quaternary structure, interacts with ATM. Mostly expressed in roots and rosette leaves of young seedlings, and, to a lower extent, in the flowers and siliques of mature plants. Preferentially expressed in the vascular tissues.

The protein localises to the mitochondrion. In terms of biological role, regulates DNA damage response (DDR) synergistically with ATM. Together with ATM, involved in the splicing of the ND2/NAD2 mRNA. Required for the accumulation of mitochondrial respiratory chain complex I. Negative regulator of plant responses to abscisic acid (ABA). May have a pivotal role in vegetative growth and the phase transition from vegetative to reproductive growth. The protein is RCC1 domain-containing protein RUG3, mitochondrial of Arabidopsis thaliana (Mouse-ear cress).